The following is a 135-amino-acid chain: Small ribosomal subunit protein uS11 (135 aa).

Positions 1–20 (MGRQRQQRSRGSRSRRRVRK) are disordered.

It belongs to the universal ribosomal protein uS11 family. Part of the 30S ribosomal subunit. Interacts with proteins S7 and S18. Binds to IF-3.

Its function is as follows. Located on the platform of the 30S subunit, it bridges several disparate RNA helices of the 16S rRNA. Forms part of the Shine-Dalgarno cleft in the 70S ribosome. The polypeptide is Small ribosomal subunit protein uS11 (Rubrobacter xylanophilus (strain DSM 9941 / JCM 11954 / NBRC 16129 / PRD-1)).